Here is a 302-residue protein sequence, read N- to C-terminus: Uricase (302 aa).

Residues Lys22 and Thr67 each act as charge relay system in the active site. Urate contacts are provided by Thr67, Asp68, Phe163, Arg180, Gln223, and Asn249. His251 serves as the catalytic Charge relay system.

It belongs to the uricase family. In terms of assembly, homotetramer.

The enzyme catalyses urate + O2 + H2O = 5-hydroxyisourate + H2O2. The protein operates within purine metabolism; urate degradation; (S)-allantoin from urate: step 1/3. Functionally, catalyzes the oxidation of uric acid to 5-hydroxyisourate, which is further processed to form (S)-allantoin. The polypeptide is Uricase (uox) (Arthrobacter globiformis).